A 354-amino-acid polypeptide reads, in one-letter code: Probable serine acetyltransferase 2 (354 aa).

This sequence belongs to the transferase hexapeptide repeat family. Homomultimer.

The catalysed reaction is L-serine + acetyl-CoA = O-acetyl-L-serine + CoA. The protein operates within amino-acid biosynthesis; L-cysteine biosynthesis; L-cysteine from L-serine: step 1/2. In Oryza sativa subsp. japonica (Rice), this protein is Probable serine acetyltransferase 2 (SAT2).